A 996-amino-acid polypeptide reads, in one-letter code: Low-density lipoprotein receptor-related protein 8 (996 aa).

The first 28 residues, 1–28 (MGRPELGALRPLALLLLLLLQLQHLSAA), serve as a signal peptide directing secretion. The Extracellular portion of the chain corresponds to 29–858 (DPLPGGQGPV…GSQMGSTVTA (830 aa)). 8 LDL-receptor class A domains span residues 40–76 (ECEE…DDCP), 79–117 (TCAD…ATCS), 120–158 (ECPA…AGCP), 160–196 (LCAP…RGCS), 199–238 (ACPP…ELCG), 250–287 (ACAP…ADCS), 290–326 (PCRE…AGCL), and 330–369 (TCEG…KVCG). Cystine bridges form between cysteine 41–cysteine 53, cysteine 48–cysteine 66, cysteine 60–cysteine 75, cysteine 80–cysteine 92, cysteine 87–cysteine 105, cysteine 99–cysteine 116, cysteine 121–cysteine 135, cysteine 128–cysteine 148, cysteine 142–cysteine 157, cysteine 161–cysteine 173, cysteine 168–cysteine 186, cysteine 180–cysteine 195, cysteine 200–cysteine 213, cysteine 207–cysteine 226, cysteine 220–cysteine 237, cysteine 251–cysteine 264, cysteine 259–cysteine 277, cysteine 271–cysteine 286, cysteine 291–cysteine 303, cysteine 298–cysteine 316, cysteine 310–cysteine 325, cysteine 331–cysteine 344, cysteine 339–cysteine 357, cysteine 351–cysteine 368, cysteine 373–cysteine 384, cysteine 380–cysteine 393, cysteine 395–cysteine 407, cysteine 413–cysteine 423, cysteine 419–cysteine 432, and cysteine 434–cysteine 447. Ca(2+) contacts are provided by tryptophan 58, aspartate 61, aspartate 63, aspartate 65, aspartate 71, and glutamate 72. The N-linked (GlcNAc...) asparagine glycan is linked to asparagine 170. The region spanning 364 to 408 (PQKVCGLNECLHNNGGCSHICTDLKIGFECTCPAGFQLLDQKTCG) is the EGF-like 1 domain. The EGF-like 2; calcium-binding domain occupies 409 to 448 (DIDECQDPDACSQICVNYKGYFKCECHPGYEMDTLTKNCK). 5 LDL-receptor class B repeats span residues 495 to 541 (NRIY…DWVH), 542 to 584 (KHIY…DPLR), 585 to 628 (GFMY…DLLS), 629 to 671 (QRLY…AVFE), and 672 to 714 (DKVF…FHEL). Residue asparagine 551 is glycosylated (N-linked (GlcNAc...) asparagine). Residues 773 to 831 (STSTTTLASAMTRTVPATTRAPGTTIHDPTYQNHSTETPSQTAAAPHSVNVPRAPSTSP) are clustered O-linked oligosaccharides. Residues 778–851 (TLASAMTRTV…SQHYGNEGSQ (74 aa)) are disordered. Residues 802-815 (TYQNHSTETPSQTA) show a composition bias toward polar residues. A glycan (N-linked (GlcNAc...) asparagine) is linked at asparagine 805. Residues 824–839 (PRAPSTSPSTPSPATS) show a composition bias toward low complexity. A glycan (N-linked (GlcNAc...) asparagine) is linked at asparagine 840. Residues 840-851 (NHSQHYGNEGSQ) show a composition bias toward polar residues. Residues 859–881 (AVIGVIVPIVVIALLCMSGYLIW) traverse the membrane as a helical segment. Topologically, residues 882 to 996 (RNWKRKNTKS…ALSLEDDGLP (115 aa)) are cytoplasmic.

This sequence belongs to the LDLR family. Homooligomer. Interacts with VLDLR. Reelin associates with two or more receptor molecules. Interacts with DAB1 and JNK-interacting proteins. Interacts with SNX17. Interacts with PCSK9. Interacts with MDK; this interaction is calcium dependent. Interacts with CLU. In terms of processing, O-glycosylated. Some alternatively spliced isoforms lack the O-linked sugar domain. Post-translationally, undergoes sequential, furin and gamma-secretase dependent, proteolytic processing, resulting in the extracellular release of the entire ligand-binding domain as a soluble polypeptide and in the intracellular domain (ICD) release into the cytoplasm. The gamma-secretase-dependent proteolytical processing occurs after the bulk of the extracellular domain has been shed, in a furin-dependent manner, in alternatively spliced isoforms carrying the furin cleavage site. Hypoglycosylation (mainly hypo-O-glycosylation) leads to increased extracellular cleavage, which in turn results in accelerating release of the intracellular domain (ICD) by the gamma-secretase. The resulting receptor fragment is able to inhibit Reelin signaling and in particular the Reelin-induced DAB1 phosphorylation. Tyrosine phosphorylated upon apoE binding. In terms of processing, ubiquitinated by MYLIP leading to degradation. Expressed in neurons throughout the brain, with strong expression in pyramidal neurons of the hippocampus, granule cells of the dentate gyrus, cortical neurons and Purkinje cells of the cerebellum. Also expressed in the epithelium of the choroid plexus and of the blood vessels (apical expression), as well as in the epididymis.

The protein localises to the cell membrane. It is found in the secreted. Functionally, cell surface receptor for Reelin (RELN) and apolipoprotein E (apoE)-containing ligands. LRP8 participates in transmitting the extracellular Reelin signal to intracellular signaling processes, by binding to DAB1 on its cytoplasmic tail. Reelin acts via both the VLDL receptor (VLDLR) and LRP8 to regulate DAB1 tyrosine phosphorylation and microtubule function in neurons. LRP8 has higher affinity for Reelin than VLDLR. LRP8 is thus a key component of the Reelin pathway which governs neuronal layering of the forebrain during embryonic brain development. Binds the endoplasmic reticulum resident receptor-associated protein (RAP). Binds dimers of beta 2-glycoprotein I and may be involved in the suppression of platelet aggregation in the vasculature. Highly expressed in the initial segment of the epididymis, where it affects the functional expression of clusterin and phospholipid hydroperoxide glutathione peroxidase (PHGPx), two proteins required for sperm maturation. May also function as an endocytic receptor. Not required for endocytic uptake of SEPP1 in the kidney which is mediated by LRP2. Together with its ligand, apolipoprotein E (apoE), may indirectly play a role in the suppression of the innate immune response by controlling the survival of myeloid-derived suppressor cells. In Mus musculus (Mouse), this protein is Low-density lipoprotein receptor-related protein 8 (Lrp8).